We begin with the raw amino-acid sequence, 482 residues long: 2-succinylbenzoate--CoA ligase (482 aa).

The protein belongs to the ATP-dependent AMP-binding enzyme family. MenE subfamily.

The enzyme catalyses 2-succinylbenzoate + ATP + CoA = 2-succinylbenzoyl-CoA + AMP + diphosphate. It functions in the pathway quinol/quinone metabolism; 1,4-dihydroxy-2-naphthoate biosynthesis; 1,4-dihydroxy-2-naphthoate from chorismate: step 5/7. The protein operates within quinol/quinone metabolism; menaquinone biosynthesis. Converts 2-succinylbenzoate (OSB) to 2-succinylbenzoyl-CoA (OSB-CoA). The chain is 2-succinylbenzoate--CoA ligase from Bacillus cereus (strain ZK / E33L).